The primary structure comprises 328 residues: DNA-directed RNA polymerase subunit alpha (328 aa).

Residues 1–233 (MHNSATEFLK…EQLEAFIDLR (233 aa)) are alpha N-terminal domain (alpha-NTD). The alpha C-terminal domain (alpha-CTD) stretch occupies residues 247 to 328 (FDPVLLRPVD…WPPVSILKND (82 aa)).

It belongs to the RNA polymerase alpha chain family. In terms of assembly, homodimer. The RNAP catalytic core consists of 2 alpha, 1 beta, 1 beta' and 1 omega subunit. When a sigma factor is associated with the core the holoenzyme is formed, which can initiate transcription.

The catalysed reaction is RNA(n) + a ribonucleoside 5'-triphosphate = RNA(n+1) + diphosphate. DNA-dependent RNA polymerase catalyzes the transcription of DNA into RNA using the four ribonucleoside triphosphates as substrates. The sequence is that of DNA-directed RNA polymerase subunit alpha from Wigglesworthia glossinidia brevipalpis.